The following is a 114-amino-acid chain: U17-barytoxin-Tl1a (114 aa).

The signal sequence occupies residues 1-20 (MKTIIVFLSLLVLATKFGDA). A propeptide spanning residues 21-74 (NEGVNQEQMKEVIQNEFREDFLNEMAPMSLLQQLEAIESTLLEKEADRNSRQKR) is cleaved from the precursor. Disulfide bonds link Cys-75/Cys-88, Cys-82/Cys-93, and Cys-87/Cys-108.

This sequence belongs to the neurotoxin 14 (magi-1) family. 03 (ICK-30-40) subfamily. As to expression, expressed by the venom gland.

It is found in the secreted. Ion channel inhibitor. The protein is U17-barytoxin-Tl1a of Trittame loki (Brush-footed trapdoor spider).